Consider the following 266-residue polypeptide: uncharacterized protein (266 aa).

This sequence belongs to the chlamydial CPn_0087/CT_309/TC_0583 family.

This is an uncharacterized protein from Chlamydia pneumoniae (Chlamydophila pneumoniae).